A 74-amino-acid chain; its full sequence is MDTLRTEEIAAKALKRVHNDRYLLASLIFERVKELGEGAKPLVDMDVKTYKLPDIAMREIAEGKVELTSIEDRE.

This sequence belongs to the RNA polymerase subunit omega family. In terms of assembly, the RNAP catalytic core consists of 2 alpha, 1 beta/beta' and 1 omega subunit. When a sigma factor is associated with the core the holoenzyme is formed, which can initiate transcription.

The enzyme catalyses RNA(n) + a ribonucleoside 5'-triphosphate = RNA(n+1) + diphosphate. Functionally, promotes RNA polymerase assembly. Latches the N- and C-terminal regions of the beta' subunit thereby facilitating its interaction with the beta and alpha subunits. The chain is DNA-directed RNA polymerase subunit omega from Helicobacter hepaticus (strain ATCC 51449 / 3B1).